We begin with the raw amino-acid sequence, 155 residues long: Small ribosomal subunit protein uS17 (155 aa).

The residue at position 2 (Ala2) is an N-acetylalanine.

The protein belongs to the universal ribosomal protein uS17 family.

The sequence is that of Small ribosomal subunit protein uS17 from Drosophila yakuba (Fruit fly).